The chain runs to 322 residues: Lipoyl synthase (322 aa).

7 residues coordinate [4Fe-4S] cluster: cysteine 69, cysteine 74, cysteine 80, cysteine 95, cysteine 99, cysteine 102, and serine 309. The region spanning 81 to 298 (FNHGTATFMI…KEIALELGFT (218 aa)) is the Radical SAM core domain.

The protein belongs to the radical SAM superfamily. Lipoyl synthase family. [4Fe-4S] cluster serves as cofactor.

The protein resides in the cytoplasm. The enzyme catalyses [[Fe-S] cluster scaffold protein carrying a second [4Fe-4S](2+) cluster] + N(6)-octanoyl-L-lysyl-[protein] + 2 oxidized [2Fe-2S]-[ferredoxin] + 2 S-adenosyl-L-methionine + 4 H(+) = [[Fe-S] cluster scaffold protein] + N(6)-[(R)-dihydrolipoyl]-L-lysyl-[protein] + 4 Fe(3+) + 2 hydrogen sulfide + 2 5'-deoxyadenosine + 2 L-methionine + 2 reduced [2Fe-2S]-[ferredoxin]. Its pathway is protein modification; protein lipoylation via endogenous pathway; protein N(6)-(lipoyl)lysine from octanoyl-[acyl-carrier-protein]: step 2/2. Catalyzes the radical-mediated insertion of two sulfur atoms into the C-6 and C-8 positions of the octanoyl moiety bound to the lipoyl domains of lipoate-dependent enzymes, thereby converting the octanoylated domains into lipoylated derivatives. This is Lipoyl synthase from Photobacterium profundum (strain SS9).